The following is a 360-amino-acid chain: Protein phosphatase 1 regulatory subunit 7 (360 aa).

The interval 1-64 (MAAERGAGQQ…GEEDPEEEHE (64 aa)) is disordered. The residue at position 2 (alanine 2) is an N-acetylalanine. Residues serine 12, serine 24, serine 27, serine 44, and serine 47 each carry the phosphoserine modification. Residues 17–34 (EVDRRVESEESGDEEGKK) are compositionally biased toward basic and acidic residues. Residues 53–63 (ERGEEDPEEEH) are compositionally biased toward acidic residues. 11 LRR repeats span residues 77 to 98 (DAED…EVLK), 99 to 120 (KVKT…EELQ), 121 to 142 (SLRE…EALT), 143 to 164 (ELEI…DKLT), 165 to 186 (RLKK…SNLH), 187 to 208 (QLQM…DTLT), 209 to 230 (NLES…DALT), 231 to 252 (NLTV…QNLV), 253 to 274 (NLRE…ENNN), 275 to 296 (KLTM…SHLT), and 297 to 318 (ELQE…DELK). Serine 322 carries the phosphoserine modification. One can recognise an LRRCT domain in the interval 331-360 (NPLQKDPQYRRKVMLALPSVRQIDATFVRF).

Belongs to the SDS22 family. Interacts with PPP1CA, PPP1CB and PPP1CC/PPP1G isoform 1. As to expression, widely expressed.

The protein localises to the nucleus. Functionally, regulatory subunit of protein phosphatase 1. The polypeptide is Protein phosphatase 1 regulatory subunit 7 (PPP1R7) (Homo sapiens (Human)).